Reading from the N-terminus, the 973-residue chain is Valine--tRNA ligase (973 aa).

Residues 57–67 (PNVTGSLHMGH) carry the 'HIGH' region motif. The short motif at 569-573 (KMSKS) is the 'KMSKS' region element. Residue Lys572 participates in ATP binding. A coiled-coil region spans residues 901–970 (MAGLIDKEAE…AKILEQKIQI (70 aa)).

Belongs to the class-I aminoacyl-tRNA synthetase family. ValS type 1 subfamily. Monomer.

It is found in the cytoplasm. It carries out the reaction tRNA(Val) + L-valine + ATP = L-valyl-tRNA(Val) + AMP + diphosphate. Functionally, catalyzes the attachment of valine to tRNA(Val). As ValRS can inadvertently accommodate and process structurally similar amino acids such as threonine, to avoid such errors, it has a 'posttransfer' editing activity that hydrolyzes mischarged Thr-tRNA(Val) in a tRNA-dependent manner. This Colwellia psychrerythraea (strain 34H / ATCC BAA-681) (Vibrio psychroerythus) protein is Valine--tRNA ligase.